The sequence spans 216 residues: Somatotropin (216 aa).

A signal peptide spans 1-26 (MAAGPRTSVLLAFTLLCLPWPQEAGA). Histidine 45 serves as a coordination point for Zn(2+). Residues cysteine 78 and cysteine 189 are joined by a disulfide bond. Serine 131 is modified (phosphoserine). Glutamate 198 lines the Zn(2+) pocket. Residues cysteine 206 and cysteine 214 are joined by a disulfide bond.

Belongs to the somatotropin/prolactin family.

The protein localises to the secreted. Plays an important role in growth control. Its major role in stimulating body growth is to stimulate the liver and other tissues to secrete IGF1. It stimulates both the differentiation and proliferation of myoblasts. It also stimulates amino acid uptake and protein synthesis in muscle and other tissues. The sequence is that of Somatotropin (GH1) from Camelus dromedarius (Dromedary).